The primary structure comprises 198 residues: Density-regulated protein (198 aa).

Position 2 is an N-acetylalanine (alanine 2). 2 positions are modified to phosphoserine: serine 20 and serine 73. Residues 72–110 (NSPKQEAGISEGQGTAGEEEEKKKQKRGGRGQIKQKKKT) form a disordered region. Threonine 86 is subject to Phosphothreonine. Residues 95-110 (KQKRGGRGQIKQKKKT) are compositionally biased toward basic residues. The SUI1 domain occupies 115 to 182 (VTIAKIPRAK…DIIDVIQEKW (68 aa)). At serine 189 the chain carries Phosphoserine.

The protein belongs to the DENR family. As to quaternary structure, interacts with MCTS1 (via PUA domain); the complex regulates translation reinitiation. In terms of tissue distribution, highly expressed in heart and skeletal muscle and moderately expressed in the brain, placenta, liver and pancreas. Weakly expressed in the lung and kidney.

The protein localises to the cytoplasm. Translation regulator forming a complex with MCTS1 to promote translation reinitiation. Translation reinitiation is the process where the small ribosomal subunit remains attached to the mRNA following termination of translation of a regulatory upstream ORF (uORF), and resume scanning on the same mRNA molecule to initiate translation of a downstream ORF, usually the main ORF (mORF). The MCTS1/DENR complex is pivotal to two linked mechanisms essential for translation reinitiation. Firstly, the dissociation of deacylated tRNAs from post-termination 40S ribosomal complexes during ribosome recycling. Secondly, the recruitment in an EIF2-independent manner of aminoacylated initiator tRNA to P site of 40S ribosomes for a new round of translation. This regulatory mechanism governs the translation of more than 150 genes which translation reinitiation is MCTS1/DENR complex-dependent. In Homo sapiens (Human), this protein is Density-regulated protein (DENR).